The following is a 286-amino-acid chain: tRNA (guanine-N(7)-)-methyltransferase (286 aa).

4 residues coordinate S-adenosyl-L-methionine: Glu-91, Glu-116, Asn-143, and Asp-165. The active site involves Asp-165. Residues Lys-169, Asp-201, and 262-265 (TNFE) each bind substrate.

It belongs to the class I-like SAM-binding methyltransferase superfamily. TrmB family.

It carries out the reaction guanosine(46) in tRNA + S-adenosyl-L-methionine = N(7)-methylguanosine(46) in tRNA + S-adenosyl-L-homocysteine. The protein operates within tRNA modification; N(7)-methylguanine-tRNA biosynthesis. Catalyzes the formation of N(7)-methylguanine at position 46 (m7G46) in tRNA. The sequence is that of tRNA (guanine-N(7)-)-methyltransferase from Bifidobacterium longum subsp. infantis (strain ATCC 15697 / DSM 20088 / JCM 1222 / NCTC 11817 / S12).